The primary structure comprises 979 residues: UPF0182 protein BCG_0095 (979 aa).

7 consecutive transmembrane segments (helical) span residues 19 to 39 (LVTAGMGMLALLLFGPRLVDI), 63 to 83 (LAIVAAVALVVAGIVLAALLL), 114 to 134 (LFGWGIAVTLGVVCGLIASFD), 174 to 194 (WLFVAVVLAFLASLLTHYLFG), 211 to 231 (VQLAVFAGAVVLLKAVAYWLD), 260 to 280 (KLVLVAIAVLCAVSFFTAIFL), and 288 to 308 (MAAALLVLSAILVGGLWPLLM). The disordered stretch occupies residues 898–948 (GTGRVATAPGGDAASAPPPGAGGPAPPQAVPPPRTTQPPAAPPRGPDVPPA). Residues 902–912 (VATAPGGDAAS) show a composition bias toward low complexity. Residues 913–946 (APPPGAGGPAPPQAVPPPRTTQPPAAPPRGPDVP) show a composition bias toward pro residues.

The protein belongs to the UPF0182 family.

It localises to the cell membrane. The sequence is that of UPF0182 protein BCG_0095 from Mycobacterium bovis (strain BCG / Pasteur 1173P2).